A 688-amino-acid polypeptide reads, in one-letter code: MTERNGGFPGDYCFEAPGGDYDEGSDSPRVSEGSNCSKRKVGETFGVSKMVLPLSGLSSSDRKELIRRLRQELEQIRVFQKNFELSRTVALTSSSASGLTRVKSFGMSRCSTGPGKTVNPISAASKPTPVTTAVMLLMKQCEALLKRLMSHQYGWVFNTPVDVVKLNILDYFNVIEHPMDLGTVKNKLTSGTYSCPSEFAADVRLTFSNAMTYNPPGNDVYVMADTLRKFFEVRWKTLEKKLSGTKVHTEPSNLDAHKEKHIVIPVPMAKKRKTTAVDCENVVDPAKRVMTDEDRLKLGKDLESLTEFPAQLINFLRDHNSNEGGIGDDEIEIDINDLSDHALFQLRDLLDEHLREIQNKKSSVEPCEIELLHGSVPGNSSMQHCDGSELDDEVVDIGENEHPTSSISPVTIEKDLVLGNSNGNSLGSVSGDPKMSSLPRASKGLGTIDLEPMLDGATSASPTRGSSVGGLDQLESASPEKISSVEADCQQDGNSAQNEKQLPPEKSYRAAILKNRFADIILKAREKPLNQNDTRDPEKLQREREELELQKKKEKARLQAEAKAAEEARRKAEAQAAAEAAAEAKRKLELEREAARQALMEMEQSVELNENAKFLEDLELLKTVDTDHLTNTIEEEDGPDVGLRSFSFGGSNPLEQLGLFMKQDEDEEEADPLTSPAPEIDIEEGEID.

Positions 1–36 (MTERNGGFPGDYCFEAPGGDYDEGSDSPRVSEGSNC) are disordered. The region spanning 132-238 (TAVMLLMKQC…KFFEVRWKTL (107 aa)) is the Bromo domain. The NET domain maps to 280 to 361 (ENVVDPAKRV…EHLREIQNKK (82 aa)). The interval 423–505 (GNSLGSVSGD…AQNEKQLPPE (83 aa)) is disordered. Phosphoserine is present on Ser478. A compositionally biased stretch (polar residues) spans 491-500 (QDGNSAQNEK). The interval 505–688 (EKSYRAAILK…EIDIEEGEID (184 aa)) is transcription activation domain. Residues 534–613 (TRDPEKLQRE…QSVELNENAK (80 aa)) adopt a coiled-coil conformation. Positions 660 to 688 (FMKQDEDEEEADPLTSPAPEIDIEEGEID) are disordered.

Interacts with BT1.

The protein resides in the nucleus. This Arabidopsis thaliana (Mouse-ear cress) protein is Transcription factor GTE9 (GTE9).